A 115-amino-acid chain; its full sequence is Large ribosomal subunit protein uL24 (115 aa).

Belongs to the universal ribosomal protein uL24 family. As to quaternary structure, part of the 50S ribosomal subunit.

One of two assembly initiator proteins, it binds directly to the 5'-end of the 23S rRNA, where it nucleates assembly of the 50S subunit. In terms of biological role, one of the proteins that surrounds the polypeptide exit tunnel on the outside of the subunit. This chain is Large ribosomal subunit protein uL24, found in Phytoplasma mali (strain AT).